The primary structure comprises 117 residues: Large ribosomal subunit protein bL20c (117 aa).

Belongs to the bacterial ribosomal protein bL20 family.

The protein resides in the plastid. Its subcellular location is the chloroplast. Its function is as follows. Binds directly to 23S ribosomal RNA and is necessary for the in vitro assembly process of the 50S ribosomal subunit. It is not involved in the protein synthesizing functions of that subunit. In Chloranthus spicatus (Chulantree), this protein is Large ribosomal subunit protein bL20c.